The primary structure comprises 403 residues: Endophilin-B2 (403 aa).

Residues M1–L27 are membrane-binding amphipathic helix. The BAR domain occupies E24–G287. Positions W210–E233 form a coiled coil. In terms of domain architecture, SH3 spans S343–S403.

Belongs to the endophilin family. As to quaternary structure, homodimer, and heterodimer with SH3GLB1.

The protein localises to the cytoplasm. In Gallus gallus (Chicken), this protein is Endophilin-B2.